Reading from the N-terminus, the 278-residue chain is Protein EXORDIUM-like 4 (278 aa).

An N-terminal signal peptide occupies residues 1–23; sequence MAYNYRFAILLVLLSATVGFTAA. Asn-35 is a glycosylation site (N-linked (GlcNAc...) asparagine).

Belongs to the EXORDIUM family.

The protein localises to the secreted. It localises to the extracellular space. It is found in the apoplast. Functionally, may play a role in a brassinosteroid-dependent regulation of growth and development. This is Protein EXORDIUM-like 4 (EXL4) from Arabidopsis thaliana (Mouse-ear cress).